The chain runs to 391 residues: Large envelope protein (391 aa).

Position 1 is an N-acetylmethionine (Met-1). A lipid anchor (N-myristoyl glycine; by host) is attached at Gly-2. Residues 2 to 108 form a pre-S1 region; sequence GLNQSTFNPL…PPLRDTHPQA (107 aa). The interval 2–163 is pre-S; that stretch reads GLNQSTFNPL…FSTTGVPVST (162 aa). The Virion surface; in external conformation portion of the chain corresponds to 2–170; that stretch reads GLNQSTFNPL…VSTMDITSSG (169 aa). Topologically, residues 2–242 are intravirion; in internal conformation; it reads GLNQSTFNPL…PGYRWMCLRR (241 aa). Residues 73 to 107 form a disordered region; that stretch reads LSVTVPDTPPPPSTNRDKGRKPTPATPPLRDTHPQ. Residues 109 to 163 are pre-S2; that stretch reads MTWNTSSFQSYLQNPKVRGLYFPAGGSTSSIVNPVPTTASTTSSSFSTTGVPVST. Residues 171–191 form a helical membrane-spanning segment; the sequence is FLGPLLALQAVFFLLTKILTM. At 192–242 the chain is on the intravirion; in external conformation side; the sequence is PQSLDSLWTSLNFLGGTPACPGLNSQSPTSSHSPTCCPPTCPGYRWMCLRR. The chain crosses the membrane as a helical span at residues 243–263; the sequence is SIIFLFILLLCLIFLLVLLDY. Topologically, residues 264–339 are virion surface; it reads QGMLPVCPLL…WALARFSWLN (76 aa). N-linked (GlcNAc...) asparagine; by host glycosylation is present at Asn-311. A helical membrane pass occupies residues 340–360; it reads SLLPFVQWFAGLSPTVWLLVI. Topologically, residues 361 to 366 are intravirion; that stretch reads WMMWFW. A helical membrane pass occupies residues 367-389; it reads GPSLFSILSPFLPLLPLFFWLWA. The Virion surface segment spans residues 390–391; the sequence is YI.

Belongs to the orthohepadnavirus major surface antigen family. In its internal form (Li-HBsAg), interacts with the capsid protein and with the isoform S. Interacts with host chaperone CANX. In terms of assembly, associates with host chaperone CANX through its pre-S2 N glycan; this association may be essential for isoform M proper secretion. As to quaternary structure, interacts with isoform L. Interacts with the antigens of satellite virus HDV (HDVAgs); this interaction is required for encapsidation of HDV genomic RNA. Post-translationally, isoform M is N-terminally acetylated by host at a ratio of 90%, and N-glycosylated by host at the pre-S2 region. Myristoylated.

It is found in the virion membrane. Functionally, the large envelope protein exists in two topological conformations, one which is termed 'external' or Le-HBsAg and the other 'internal' or Li-HBsAg. In its external conformation the protein attaches the virus to cell receptors and thereby initiating infection. This interaction determines the species specificity and liver tropism. This attachment induces virion internalization predominantly through caveolin-mediated endocytosis. The large envelope protein also assures fusion between virion membrane and endosomal membrane. In its internal conformation the protein plays a role in virion morphogenesis and mediates the contact with the nucleocapsid like a matrix protein. Its function is as follows. The middle envelope protein plays an important role in the budding of the virion. It is involved in the induction of budding in a nucleocapsid independent way. In this process the majority of envelope proteins bud to form subviral lipoprotein particles of 22 nm of diameter that do not contain a nucleocapsid. This chain is Large envelope protein, found in Woolly monkey hepatitis B virus (isolate Louisville) (WMHBV).